The sequence spans 154 residues: Protein X (154 aa).

The segment at Arg28–Gly50 is disordered. Low complexity predominate over residues Pro33–Asp48. The interval Pro68–Phe117 is mitochondrial targeting sequence.

It belongs to the orthohepadnavirus protein X family. As to quaternary structure, may form homodimer. May interact with host CEBPA, CFLAR, CREB1, DDB1, E4F1, HBXIP, HSPD1/HSP60, NFKBIA, POLR2E and SMAD4. Interacts with host SMC5-SMC6 complex and induces its degradation. Interacts with host TRPC4AP; leading to prevent ubiquitination of TRPC4AP. Interacts with host PLSCR1; this interaction promotes ubiquitination and degradation of HBx and impairs HBx-mediated cell proliferation. Post-translationally, a fraction may be phosphorylated in insect cells and HepG2 cells, a human hepatoblastoma cell line. Phosphorylated in vitro by host protein kinase C or mitogen-activated protein kinase. N-acetylated in insect cells.

The protein localises to the host cytoplasm. It localises to the host nucleus. It is found in the host mitochondrion. Multifunctional protein that plays a role in silencing host antiviral defenses and promoting viral transcription. Does not seem to be essential for HBV infection. May be directly involved in development of cirrhosis and liver cancer (hepatocellular carcinoma). Most of cytosolic activities involve modulation of cytosolic calcium. The effect on apoptosis is controversial depending on the cell types in which the studies have been conducted. May induce apoptosis by localizing in mitochondria and causing loss of mitochondrial membrane potential. May also modulate apoptosis by binding host CFLAR, a key regulator of the death-inducing signaling complex (DISC). Promotes viral transcription by using the host E3 ubiquitin ligase DDB1 to target the SMC5-SMC6 complex to proteasomal degradation. This host complex would otherwise bind to viral episomal DNA, and prevents its transcription. Moderately stimulates transcription of many different viral and cellular transcription elements. Promoters and enhancers stimulated by HBx contain DNA binding sites for NF-kappa-B, AP-1, AP-2, c-EBP, ATF/CREB, or the calcium-activated factor NF-AT. The chain is Protein X from Homo sapiens (Human).